The primary structure comprises 208 residues: Methylthioribulose-1-phosphate dehydratase (208 aa).

Zn(2+) is bound by residues H99 and H101.

This sequence belongs to the aldolase class II family. MtnB subfamily. Zn(2+) serves as cofactor.

The enzyme catalyses 5-(methylsulfanyl)-D-ribulose 1-phosphate = 5-methylsulfanyl-2,3-dioxopentyl phosphate + H2O. It functions in the pathway amino-acid biosynthesis; L-methionine biosynthesis via salvage pathway; L-methionine from S-methyl-5-thio-alpha-D-ribose 1-phosphate: step 2/6. Catalyzes the dehydration of methylthioribulose-1-phosphate (MTRu-1-P) into 2,3-diketo-5-methylthiopentyl-1-phosphate (DK-MTP-1-P). The protein is Methylthioribulose-1-phosphate dehydratase of Aquifex aeolicus (strain VF5).